The primary structure comprises 457 residues: Ig mu chain C region (457 aa).

A CH1 region spans residues 1–105; that stretch reads SSSAPLLFPL…GEKEKKVELQ (105 aa). Residues Cys27 and Cys89 are joined by a disulfide bond. 2 N-linked (GlcNAc...) asparagine glycosylation sites follow: Asn45 and Asn113. Positions 106-220 are CH2; sequence VTPELPPNVS…KNVSSVCMGD (115 aa). Residues Cys136 and Cys200 are joined by a disulfide bond. Residues Asn212, Asn276, and Asn283 are each glycosylated (N-linked (GlcNAc...) asparagine). Residues 221–326 are CH3; that stretch reads DTSTGISVFL…PLKQSLSRPK (106 aa). Cystine bridges form between Cys248–Cys307 and Cys355–Cys417. Residues 327-457 are CH4; the sequence is DVANDPPSVF…VLSDTASTCY (131 aa). The N-linked (GlcNAc...) asparagine glycan is linked to Asn444.

This Suncus murinus (Asian house shrew) protein is Ig mu chain C region.